The primary structure comprises 398 residues: uncharacterized protein (398 aa).

The Radical SAM core domain maps to 21-253 (TNFGPTNLII…WQLTSTSEPE (233 aa)). Positions 37, 41, and 44 each coordinate [4Fe-4S] cluster.

This sequence belongs to the radical SAM superfamily. Anaerobic sulfatase-maturating enzyme family. Requires [4Fe-4S] cluster as cofactor.

This is an uncharacterized protein from Synechocystis sp. (strain ATCC 27184 / PCC 6803 / Kazusa).